Here is a 242-residue protein sequence, read N- to C-terminus: Uridylate kinase (242 aa).

Position 16 to 19 (16 to 19 (KISG)) interacts with ATP. Positions 24 to 29 (GDQGFG) are involved in allosteric activation by GTP. G58 is a binding site for UMP. 2 residues coordinate ATP: G59 and R63. UMP is bound by residues D78 and 139–146 (TGNPYFTT). The ATP site is built by T166, Y172, and D175.

It belongs to the UMP kinase family. Homohexamer.

The protein localises to the cytoplasm. It carries out the reaction UMP + ATP = UDP + ADP. It participates in pyrimidine metabolism; CTP biosynthesis via de novo pathway; UDP from UMP (UMPK route): step 1/1. Allosterically activated by GTP. Inhibited by UTP. In terms of biological role, catalyzes the reversible phosphorylation of UMP to UDP. The sequence is that of Uridylate kinase from Roseobacter denitrificans (strain ATCC 33942 / OCh 114) (Erythrobacter sp. (strain OCh 114)).